The primary structure comprises 297 residues: HTH-type transcriptional regulator ArgP (297 aa).

Residues 4–60 form the HTH lysR-type domain; that stretch reads PDYRTLQALDAVIRERGFERAAQKLCITQSAVSQRIKQLENMFGQPLLVRTVPPRPT. Residues 21-40 constitute a DNA-binding region (H-T-H motif); the sequence is FERAAQKLCITQSAVSQRIK.

It belongs to the LysR transcriptional regulatory family. In terms of assembly, homodimer.

Controls the transcription of genes involved in arginine and lysine metabolism. This Escherichia coli O127:H6 (strain E2348/69 / EPEC) protein is HTH-type transcriptional regulator ArgP.